The sequence spans 190 residues: Dense granule protein 1 (190 aa).

The N-terminal stretch at 1 to 24 is a signal peptide; it reads MVRVSAIVGAAASVFVCLSAGAYA. N-linked (GlcNAc...) asparagine glycosylation occurs at Asn30.

It localises to the secreted. This is Dense granule protein 1 (GRA1) from Toxoplasma gondii.